A 230-amino-acid polypeptide reads, in one-letter code: Orotidine 5'-phosphate decarboxylase (230 aa).

Substrate is bound by residues Asp11, Lys34, 61 to 70 (DLKLHDIPNT), Thr117, Arg179, Gln188, Gly208, and Arg209. The Proton donor role is filled by Lys63.

Belongs to the OMP decarboxylase family. Type 1 subfamily. Homodimer.

It catalyses the reaction orotidine 5'-phosphate + H(+) = UMP + CO2. The protein operates within pyrimidine metabolism; UMP biosynthesis via de novo pathway; UMP from orotate: step 2/2. Functionally, catalyzes the decarboxylation of orotidine 5'-monophosphate (OMP) to uridine 5'-monophosphate (UMP). This chain is Orotidine 5'-phosphate decarboxylase, found in Streptococcus mutans serotype c (strain ATCC 700610 / UA159).